A 429-amino-acid chain; its full sequence is D-amino acid dehydrogenase (429 aa).

3–17 (VLILGSGVIGTTTAW) contributes to the FAD binding site.

This sequence belongs to the DadA oxidoreductase family. The cofactor is FAD.

The catalysed reaction is a D-alpha-amino acid + A + H2O = a 2-oxocarboxylate + AH2 + NH4(+). Its pathway is amino-acid degradation; D-alanine degradation; NH(3) and pyruvate from D-alanine: step 1/1. Oxidative deamination of D-amino acids. The sequence is that of D-amino acid dehydrogenase from Xanthomonas campestris pv. campestris (strain 8004).